Reading from the N-terminus, the 250-residue chain is DNA polymerase sliding clamp (250 aa).

It belongs to the PCNA family. In terms of assembly, homotrimer. The subunits circularize to form a toroid; DNA passes through its center. Replication factor C (RFC) is required to load the toroid on the DNA.

Functionally, sliding clamp subunit that acts as a moving platform for DNA processing. Responsible for tethering the catalytic subunit of DNA polymerase and other proteins to DNA during high-speed replication. This is DNA polymerase sliding clamp from Methanococcus maripaludis (strain DSM 14266 / JCM 13030 / NBRC 101832 / S2 / LL).